The following is a 268-amino-acid chain: Nickel import ATP-binding protein NikE (268 aa).

The region spanning 4 to 252 is the ABC transporter domain; it reads LNVCGLSHHY…SSDAGRVLQN (249 aa). An ATP-binding site is contributed by 45–52; that stretch reads GRSGCGKS.

It belongs to the ABC transporter superfamily. Nickel importer (TC 3.A.1.5.3) family. The complex is composed of two ATP-binding proteins (NikD and NikE), two transmembrane proteins (NikB and NikC) and a solute-binding protein (NikA).

It is found in the cell inner membrane. The enzyme catalyses Ni(2+)(out) + ATP + H2O = Ni(2+)(in) + ADP + phosphate + H(+). Its function is as follows. Part of the ABC transporter complex NikABCDE involved in nickel import. Responsible for energy coupling to the transport system. This Shigella flexneri protein is Nickel import ATP-binding protein NikE.